The chain runs to 218 residues: Probable nicotinate-nucleotide adenylyltransferase (218 aa).

Belongs to the NadD family.

The enzyme catalyses nicotinate beta-D-ribonucleotide + ATP + H(+) = deamido-NAD(+) + diphosphate. The protein operates within cofactor biosynthesis; NAD(+) biosynthesis; deamido-NAD(+) from nicotinate D-ribonucleotide: step 1/1. Catalyzes the reversible adenylation of nicotinate mononucleotide (NaMN) to nicotinic acid adenine dinucleotide (NaAD). The chain is Probable nicotinate-nucleotide adenylyltransferase from Burkholderia cenocepacia (strain ATCC BAA-245 / DSM 16553 / LMG 16656 / NCTC 13227 / J2315 / CF5610) (Burkholderia cepacia (strain J2315)).